The chain runs to 324 residues: Aldo-keto reductase family 1 member A1 (324 aa).

Ser-3 is modified (phosphoserine). NADP(+) contacts are provided by residues 10–19 (GQKMPLIGLG), Thr-20, and Trp-21. Phosphoserine is present on Ser-37. Asp-44 contacts NADP(+). The active-site Proton donor is the Tyr-49. Lys-126 carries the post-translational modification N6-acetyllysine; alternate. Lys-126 is subject to N6-succinyllysine; alternate. The residue at position 144 (Lys-144) is an N6-succinyllysine. 13 residues coordinate NADP(+): Ser-161, Asn-162, Ser-210, Leu-212, Ser-214, Ser-215, Lys-262, Ser-263, Ile-264, Thr-265, Arg-268, Gln-271, and Asn-272. Ser-210 bears the Phosphoserine mark.

It belongs to the aldo/keto reductase family.

The protein resides in the cytoplasm. Its subcellular location is the cytosol. It localises to the apical cell membrane. The enzyme catalyses a primary alcohol + NADP(+) = an aldehyde + NADPH + H(+). The catalysed reaction is L-gulonate + NADP(+) = aldehydo-D-glucuronate + NADPH + H(+). It carries out the reaction L-gulono-1,4-lactone + NADP(+) = D-glucurono-3,6-lactone + NADPH + H(+). It catalyses the reaction allyl alcohol + NADP(+) = acrolein + NADPH + H(+). The enzyme catalyses glycerol + NADP(+) = D-glyceraldehyde + NADPH + H(+). The catalysed reaction is glycerol + NADP(+) = L-glyceraldehyde + NADPH + H(+). It carries out the reaction hydroxyacetone + NADP(+) = methylglyoxal + NADPH + H(+). It catalyses the reaction 3-deoxyfructose + NADP(+) = 3-deoxyglucosone + NADPH + H(+). The enzyme catalyses (R)-mevalonate + NADP(+) = (R)-mevaldate + NADPH + H(+). The catalysed reaction is S-nitroso-CoA + NADPH + H(+) = sulfinamide-CoA + NADP(+). It carries out the reaction S-nitrosoglutathione + NADPH + H(+) = S-(hydroxysulfenamide)glutathione + NADP(+). In terms of biological role, catalyzes the NADPH-dependent reduction of a wide variety of carbonyl-containing compounds to their corresponding alcohols. Displays enzymatic activity towards endogenous metabolites such as aromatic and aliphatic aldehydes, ketones, monosaccharides and bile acids, with a preference for negatively charged substrates, such as glucuronate and succinic semialdehyde. Plays an important role by catalyzing the reduction of D-glucuronic acid and D-glucurono-gamma-lactone. Functions as a detoxifiying enzyme by reducing a range of toxic aldehydes. Reduces methylglyoxal and 3-deoxyglucosone, which are present at elevated levels under hyperglycemic conditions and are cytotoxic. Involved also in the detoxification of lipid-derived aldehydes like acrolein. Plays a role in the activation of procarcinogens, such as polycyclic aromatic hydrocarbon trans-dihydrodiols, and in the metabolism of various xenobiotics and drugs. Also acts as an inhibitor of protein S-nitrosylation by mediating degradation of S-nitroso-coenzyme A (S-nitroso-CoA), a cofactor required to S-nitrosylate proteins. S-nitroso-CoA reductase activity is involved in reprogramming intermediary metabolism in renal proximal tubules, notably by inhibiting protein S-nitrosylation of isoform 2 of PKM (PKM2). Also acts as a S-nitroso-glutathione reductase by catalyzing the NADPH-dependent reduction of S-nitrosoglutathione. Displays no reductase activity towards retinoids. This chain is Aldo-keto reductase family 1 member A1 (AKR1A1), found in Cricetulus griseus (Chinese hamster).